The primary structure comprises 313 residues: Homoserine O-succinyltransferase (313 aa).

Cysteine 142 (acyl-thioester intermediate) is an active-site residue. Lysine 163 and serine 192 together coordinate substrate. Histidine 235 acts as the Proton acceptor in catalysis. Glutamate 237 is an active-site residue. Arginine 249 provides a ligand contact to substrate.

It belongs to the MetA family.

The protein resides in the cytoplasm. It carries out the reaction L-homoserine + succinyl-CoA = O-succinyl-L-homoserine + CoA. It functions in the pathway amino-acid biosynthesis; L-methionine biosynthesis via de novo pathway; O-succinyl-L-homoserine from L-homoserine: step 1/1. Functionally, transfers a succinyl group from succinyl-CoA to L-homoserine, forming succinyl-L-homoserine. This Vibrio vulnificus (strain YJ016) protein is Homoserine O-succinyltransferase.